Reading from the N-terminus, the 217-residue chain is Cytidylate kinase (217 aa).

ATP is bound at residue 10-18 (GPAGAGKST).

This sequence belongs to the cytidylate kinase family. Type 1 subfamily.

The protein localises to the cytoplasm. It carries out the reaction CMP + ATP = CDP + ADP. It catalyses the reaction dCMP + ATP = dCDP + ADP. The polypeptide is Cytidylate kinase (Clostridium botulinum (strain Langeland / NCTC 10281 / Type F)).